The primary structure comprises 187 residues: Elongation factor P (187 aa).

The protein belongs to the elongation factor P family.

It is found in the cytoplasm. It functions in the pathway protein biosynthesis; polypeptide chain elongation. Its function is as follows. Involved in peptide bond synthesis. Stimulates efficient translation and peptide-bond synthesis on native or reconstituted 70S ribosomes in vitro. Probably functions indirectly by altering the affinity of the ribosome for aminoacyl-tRNA, thus increasing their reactivity as acceptors for peptidyl transferase. This Rhodococcus opacus (strain B4) protein is Elongation factor P.